The sequence spans 104 residues: MKQVSDASFEEDVLKADGPNXVDFWAEWCGPCRQXAPALEELATALGDKVTVAKINIDENPQTPSKYGVRGIPTLMIFKDGQVAATKIGALPKTKLFEWVEASV.

The region spanning 2-104 (KQVSDASFEE…KLFEWVEASV (103 aa)) is the Thioredoxin domain. A disulfide bridge links Cys29 with Cys32.

It belongs to the thioredoxin family.

Its function is as follows. Participates in various redox reactions through the reversible oxidation of its active center dithiol to a disulfide and catalyzes dithiol-disulfide exchange reactions. This chain is Thioredoxin (trxA), found in Rhodospirillum rubrum.